The following is a 156-amino-acid chain: Calcium-binding protein A (156 aa).

4 consecutive EF-hand domains span residues 4–39 (AITK…TGSK), 40–75 (DPLR…VAAK), 80–115 (AINN…NNPD), and 118–153 (APLM…YKSL). Ca(2+) contacts are provided by aspartate 17, asparagine 19, aspartate 21, asparagine 23, glutamate 28, aspartate 53, aspartate 55, aspartate 57, glutamate 64, aspartate 93, aspartate 95, aspartate 97, arginine 99, glutamate 104, aspartate 131, aspartate 133, aspartate 135, and glutamate 142.

The polypeptide is Calcium-binding protein A (cbpA) (Dictyostelium discoideum (Social amoeba)).